Reading from the N-terminus, the 338-residue chain is Heat shock factor 2-binding protein (338 aa).

The interval 1–20 (MAATVGDGSGTEEACRNMES) is disordered. The stretch at 12–126 (EEACRNMESK…LLQQAEYCTQ (115 aa)) forms a coiled coil. The interaction with BRME1 stretch occupies residues 18-55 (MESKEEFVKVRKKDLERLTTEVMQIRDFLPRILNGELL). Residues 87–338 (ARLETAQADS…EDLRALDCNV (252 aa)) form an interaction with BRCA2 region.

Interacts (via C-terminus) with BNC1. Associates with HSF2. The interaction seems to occur between the trimerization domain of HSF2 and the N-terminal hydrophilic region of HSF2BP. Interacts (via N-terminus) with BRME1. Interacts with BRCA2 and BRME1; the interactions are direct and allow the formation of a ternary complex. The complex BRME1:HSF2BP:BRCA2 interacts with SPATA22, MEIOB and RAD51. In terms of processing, sumoylated by UBE2I in response to MEKK1-mediated stimuli. In terms of tissue distribution, expressed in testis and, to a lesser extent, in lung and muscle.

Its subcellular location is the cytoplasm. It localises to the chromosome. In terms of biological role, meiotic recombination factor component of recombination bridges involved in meiotic double-strand break repair. Modulates the localization of recombinases DMC1:RAD51 to meiotic double-strand break (DSB) sites through the interaction with BRCA2 and its recruitment during meiotic recombination. Indispensable for the DSB repair, homologous synapsis, and crossover formation that are needed for progression past metaphase I, is essential for spermatogenesis and male fertility. Required for proper recombinase recruitment in female meiosis. Inhibits BNC1 transcriptional activity during spermatogenesis, probably by sequestering it in the cytoplasm. May be involved in modulating HSF2 activation in testis. The polypeptide is Heat shock factor 2-binding protein (Mus musculus (Mouse)).